Here is a 177-residue protein sequence, read N- to C-terminus: Protein SPMIP1 (177 aa).

Residues 47 to 80 form a disordered region; that stretch reads SRLPRKLPTLLPQASVAPPPPASKTTPSKAPSPA.

The chain is Protein SPMIP1 (Spmip1) from Mus musculus (Mouse).